A 409-amino-acid polypeptide reads, in one-letter code: SPI-1 type 3 secretion system translocon protein SctB (409 aa).

A helical transmembrane segment spans residues 119–140 (ISGMSSSAVALLAAANTLMLTL).

Belongs to the SctB/SipC family. In terms of assembly, the core secretion machinery of the T3SS is composed of approximately 20 different proteins, including cytoplasmic components, a base, an export apparatus and a needle. This subunit is involved in the formation of a pore, called the translocon, in host membrane.

The protein resides in the secreted. It is found in the host membrane. Component of the type III secretion system 1 (SPI-1 T3SS), also called injectisome, which is used to inject bacterial effector proteins into eukaryotic host cells. SipB/SctE1 and SipC/SctB1 are inserted into the host membrane where they form a pore and allow the translocation of effector proteins into the cytosol of target cells. The sequence is that of SPI-1 type 3 secretion system translocon protein SctB from Salmonella typhimurium (strain 14028s / SGSC 2262).